Reading from the N-terminus, the 259-residue chain is Leucyl/phenylalanyl-tRNA--protein transferase (259 aa).

Belongs to the L/F-transferase family.

The protein localises to the cytoplasm. The enzyme catalyses N-terminal L-lysyl-[protein] + L-leucyl-tRNA(Leu) = N-terminal L-leucyl-L-lysyl-[protein] + tRNA(Leu) + H(+). The catalysed reaction is N-terminal L-arginyl-[protein] + L-leucyl-tRNA(Leu) = N-terminal L-leucyl-L-arginyl-[protein] + tRNA(Leu) + H(+). It catalyses the reaction L-phenylalanyl-tRNA(Phe) + an N-terminal L-alpha-aminoacyl-[protein] = an N-terminal L-phenylalanyl-L-alpha-aminoacyl-[protein] + tRNA(Phe). Its function is as follows. Functions in the N-end rule pathway of protein degradation where it conjugates Leu, Phe and, less efficiently, Met from aminoacyl-tRNAs to the N-termini of proteins containing an N-terminal arginine or lysine. The sequence is that of Leucyl/phenylalanyl-tRNA--protein transferase from Teredinibacter turnerae (strain ATCC 39867 / T7901).